The chain runs to 354 residues: Uroporphyrinogen decarboxylase (354 aa).

Substrate is bound by residues 27-31, Asp77, Tyr154, Thr209, and His327; that span reads RQAGR.

The protein belongs to the uroporphyrinogen decarboxylase family. As to quaternary structure, homodimer.

It is found in the cytoplasm. It carries out the reaction uroporphyrinogen III + 4 H(+) = coproporphyrinogen III + 4 CO2. It participates in porphyrin-containing compound metabolism; protoporphyrin-IX biosynthesis; coproporphyrinogen-III from 5-aminolevulinate: step 4/4. In terms of biological role, catalyzes the decarboxylation of four acetate groups of uroporphyrinogen-III to yield coproporphyrinogen-III. The chain is Uroporphyrinogen decarboxylase from Salmonella newport (strain SL254).